The primary structure comprises 148 residues: MATPARAPESPPSADPALVAGPAEEAECPPPRQPQPAQNVLAAPRLRAPSSRGLGAAEFGGAAGNVEAPGETFAQRVSWGPAESPPGSFSSSSLGAPLPSRTLFPSLEGDFDSVTFASVLRASGRRACCGRAVPLPGQKIHLQIARQR.

Residues 1–66 (MATPARAPES…AEFGGAAGNV (66 aa)) form a disordered region. The span at 53–66 (GLGAAEFGGAAGNV) shows a compositional bias: low complexity.

This is DNA-directed RNA polymerase II subunit GRINL1A, isoforms 4/5 (POLR2M) from Homo sapiens (Human).